A 661-amino-acid polypeptide reads, in one-letter code: UvrABC system protein B (661 aa).

Residues 28-414 (DGVNEGKRHQ…HTDEMVEQII (387 aa)) enclose the Helicase ATP-binding domain. 41-48 (GATGTGKT) lines the ATP pocket. A Beta-hairpin motif is present at residues 94–117 (YYDYYQPEAYVPSTDTFIEKDASI). Residues 432 to 598 (QIDDLLSEIQ…TINKKIHDVI (167 aa)) form the Helicase C-terminal domain. Residues 603–624 (ESDETNQQQQTELPKKMTKKER) are disordered. Residues 625–660 (QKTIENIEKEMKKAAKDLDFEKATELRDMLFELKAE) form the UVR domain.

It belongs to the UvrB family. As to quaternary structure, forms a heterotetramer with UvrA during the search for lesions. Interacts with UvrC in an incision complex.

It is found in the cytoplasm. Functionally, the UvrABC repair system catalyzes the recognition and processing of DNA lesions. A damage recognition complex composed of 2 UvrA and 2 UvrB subunits scans DNA for abnormalities. Upon binding of the UvrA(2)B(2) complex to a putative damaged site, the DNA wraps around one UvrB monomer. DNA wrap is dependent on ATP binding by UvrB and probably causes local melting of the DNA helix, facilitating insertion of UvrB beta-hairpin between the DNA strands. Then UvrB probes one DNA strand for the presence of a lesion. If a lesion is found the UvrA subunits dissociate and the UvrB-DNA preincision complex is formed. This complex is subsequently bound by UvrC and the second UvrB is released. If no lesion is found, the DNA wraps around the other UvrB subunit that will check the other stand for damage. This is UvrABC system protein B from Staphylococcus epidermidis (strain ATCC 35984 / DSM 28319 / BCRC 17069 / CCUG 31568 / BM 3577 / RP62A).